A 411-amino-acid polypeptide reads, in one-letter code: 2,3-bisphosphoglycerate-independent phosphoglycerate mutase (411 aa).

The protein belongs to the BPG-independent phosphoglycerate mutase family. A-PGAM subfamily.

The catalysed reaction is (2R)-2-phosphoglycerate = (2R)-3-phosphoglycerate. It functions in the pathway carbohydrate degradation; glycolysis; pyruvate from D-glyceraldehyde 3-phosphate: step 3/5. Functionally, catalyzes the interconversion of 2-phosphoglycerate and 3-phosphoglycerate. This Pyrobaculum calidifontis (strain DSM 21063 / JCM 11548 / VA1) protein is 2,3-bisphosphoglycerate-independent phosphoglycerate mutase.